The sequence spans 125 residues: Fluoride-specific ion channel FluC (125 aa).

The next 4 helical transmembrane spans lie at 3–23 (FILI…VSKV), 33–53 (IPLG…FVLF), 65–85 (FVLF…TFAY), and 99–119 (LVYF…GMVL). Residues glycine 75 and threonine 78 each coordinate Na(+).

The protein belongs to the fluoride channel Fluc/FEX (TC 1.A.43) family.

Its subcellular location is the cell inner membrane. It catalyses the reaction fluoride(in) = fluoride(out). With respect to regulation, na(+) is not transported, but it plays an essential structural role and its presence is essential for fluoride channel function. In terms of biological role, fluoride-specific ion channel. Important for reducing fluoride concentration in the cell, thus reducing its toxicity. The sequence is that of Fluoride-specific ion channel FluC from Thermosipho melanesiensis (strain DSM 12029 / CIP 104789 / BI429).